Reading from the N-terminus, the 99-residue chain is MALELSDVKRIAHLARIEVSEGEAAQTLTQLNQFFSLVEQMQAVDTTGIEPMAHPIEQVQAQAQRLRDDAVTEADRRADYQQCAPATEAGLYLVPKVIE.

The protein belongs to the GatC family. Heterotrimer of A, B and C subunits.

It catalyses the reaction L-glutamyl-tRNA(Gln) + L-glutamine + ATP + H2O = L-glutaminyl-tRNA(Gln) + L-glutamate + ADP + phosphate + H(+). The catalysed reaction is L-aspartyl-tRNA(Asn) + L-glutamine + ATP + H2O = L-asparaginyl-tRNA(Asn) + L-glutamate + ADP + phosphate + 2 H(+). Its function is as follows. Allows the formation of correctly charged Asn-tRNA(Asn) or Gln-tRNA(Gln) through the transamidation of misacylated Asp-tRNA(Asn) or Glu-tRNA(Gln) in organisms which lack either or both of asparaginyl-tRNA or glutaminyl-tRNA synthetases. The reaction takes place in the presence of glutamine and ATP through an activated phospho-Asp-tRNA(Asn) or phospho-Glu-tRNA(Gln). The chain is Aspartyl/glutamyl-tRNA(Asn/Gln) amidotransferase subunit C from Ralstonia pickettii (strain 12J).